Consider the following 625-residue polypeptide: Probable inactive receptor kinase At5g16590 (625 aa).

The N-terminal stretch at 1 to 23 (MKNKTNLGLSVFFFFICLVSVTS) is a signal peptide. LRR repeat units lie at residues 88-111 (KLET…ANLT), 112-134 (LLRY…LFTL), 136-158 (NIIR…VNSA), 160-182 (RLAT…KIKL), and 183-204 (QQFN…SGMP). The chain crosses the membrane as a helical span at residues 246-266 (AIVGIVIGCFVLLLVLFLIVF). Residues 343–613 (KASAEVLGKG…PEVTRLIEEV (271 aa)) enclose the Protein kinase domain. Residue Ser-345 is modified to Phosphoserine. ATP-binding positions include 349 to 357 (LGKGTFGSS) and Lys-371. Ser-422 bears the Phosphoserine mark. Residues Thr-442 and Thr-496 each carry the phosphothreonine modification. The residue at position 517 (Ser-517) is a Phosphoserine. Thr-593 is subject to Phosphothreonine. Ser-619 and Ser-624 each carry phosphoserine.

This sequence belongs to the protein kinase superfamily. Ser/Thr protein kinase family.

The protein localises to the cell membrane. Functionally, might be involved in early recognition of growth promoting fungi. Appears to be specific for P.indica. The polypeptide is Probable inactive receptor kinase At5g16590 (Arabidopsis thaliana (Mouse-ear cress)).